The primary structure comprises 150 residues: Large ribosomal subunit protein bL9 (150 aa).

Belongs to the bacterial ribosomal protein bL9 family.

Functionally, binds to the 23S rRNA. The chain is Large ribosomal subunit protein bL9 from Photobacterium profundum (strain SS9).